The sequence spans 356 residues: Serine/arginine-rich splicing factor RS41 (356 aa).

RRM domains follow at residues 2–74 (KPVF…WTKN) and 96–167 (KTLF…YAVK). A disordered region spans residues 73–92 (KNDRGGAGRSGGSRRSSSGL). A compositionally biased stretch (basic and acidic residues) spans 168-186 (DDDSRGNGYSPERRRDRSP). The disordered stretch occupies residues 168–356 (DDDSRGNGYS…SPSRSPPAEE (189 aa)). 6 positions are modified to phosphoserine: serine 192, serine 194, serine 210, serine 239, serine 254, and serine 274. The span at 238–253 (LSPDYKRDDRRRERVA) shows a compositional bias: basic and acidic residues. Tandem repeats lie at residues 267–278 (KGRGESRSPPPY), 279–290 (EKRRESRSPPPY), and 291–302 (EKRRESRSPPPY). The segment at 267-307 (KGRGESRSPPPYEKRRESRSPPPYEKRRESRSPPPYEKRRE) is 4 X 12 AA tandem repeats of [KE]-[GK]-R -[GR]-E-S-R-S-P-P-P-Y. A compositionally biased stretch (basic and acidic residues) spans 268–306 (GRGESRSPPPYEKRRESRSPPPYEKRRESRSPPPYEKRR). The 4; truncated repeat unit spans residues 303–307 (EKRRE). Phosphoserine occurs at positions 309, 324, 342, 347, and 351.

The protein belongs to the splicing factor SR family. RS subfamily. Component of the spliceosome. Interacts with RCF3 and CPL1. Interacts with DRB1/HYL1 and SE. As to expression, leaves, stem, roots and flowers.

It is found in the nucleus. The protein resides in the nucleus speckle. In terms of biological role, required for constitutive and alternative pre-mRNA splicing. Involved in primary miRNA processing and pri-miRNA biogenesis. Binds both intronless and intron-containing pri-miRNAs. This chain is Serine/arginine-rich splicing factor RS41 (RS41), found in Arabidopsis thaliana (Mouse-ear cress).